The sequence spans 409 residues: NADH-quinone oxidoreductase subunit D (409 aa).

The protein belongs to the complex I 49 kDa subunit family. NDH-1 is composed of 14 different subunits. Subunits NuoB, C, D, E, F, and G constitute the peripheral sector of the complex.

It localises to the cell inner membrane. It catalyses the reaction a quinone + NADH + 5 H(+)(in) = a quinol + NAD(+) + 4 H(+)(out). In terms of biological role, NDH-1 shuttles electrons from NADH, via FMN and iron-sulfur (Fe-S) centers, to quinones in the respiratory chain. The immediate electron acceptor for the enzyme in this species is believed to be ubiquinone. Couples the redox reaction to proton translocation (for every two electrons transferred, four hydrogen ions are translocated across the cytoplasmic membrane), and thus conserves the redox energy in a proton gradient. This is NADH-quinone oxidoreductase subunit D from Helicobacter pylori (strain G27).